We begin with the raw amino-acid sequence, 589 residues long: Muscarinic acetylcholine receptor M3 (589 aa).

Topologically, residues 1–66 (MTLHSNSTTS…DPLGGHTIWQ (66 aa)) are extracellular. N-linked (GlcNAc...) asparagine glycosylation is found at Asn-6, Asn-15, Asn-41, Asn-48, and Asn-52. Residues 67–90 (VVFIAFLTGFLALVTIIGNILVIV) form a helical membrane-spanning segment. The Cytoplasmic portion of the chain corresponds to 91-103 (AFKVNKQLKTVNN). The chain crosses the membrane as a helical span at residues 104–129 (YFLLSLACADLIIGVISMNLFTTYII). The Extracellular segment spans residues 130-141 (MNRWALGNLACD). Cysteines 140 and 220 form a disulfide. Residues 142-163 (LWLSIDYVASNASVMNLLVISF) form a helical membrane-spanning segment. Residues 164–183 (DRYFSITRPLTYRAKRTTKR) lie on the Cytoplasmic side of the membrane. The chain crosses the membrane as a helical span at residues 184-205 (AGVMIGLAWVISFVLWAPAILF). The Extracellular portion of the chain corresponds to 206–228 (WQYFVGKRTVPPGECFIQFLSEP). The chain crosses the membrane as a helical span at residues 229-251 (TITFGTAIAAFYMPVTIMTILYW). Residues 252–490 (RIYKETEKRT…SLIKEKKAAQ (239 aa)) are Cytoplasmic-facing. Residues 274–280 (AEAENFV) carry the Basolateral sorting signal motif. Positions 323 to 356 (AEQMDQDHSSSDSWNNNDAAASLENSASSDEEDI) are disordered. Low complexity predominate over residues 333–344 (SDSWNNNDAAAS). Ser-384 is subject to Phosphoserine. A helical transmembrane segment spans residues 491–513 (TLSAILLAFIITWTPYNIMVLVN). Topologically, residues 514–525 (TFCDSCIPKTYW) are extracellular. The cysteines at positions 516 and 519 are disulfide-linked. A helical transmembrane segment spans residues 526–545 (NLGYWLCYINSTVNPVCYAL). At 546 to 589 (CNKTFRTTFKTLLLCQCDKRKRRKQQYQQRQSVIFHKRVPEQAL) the chain is on the cytoplasmic side.

This sequence belongs to the G-protein coupled receptor 1 family. Muscarinic acetylcholine receptor subfamily. CHRM3 sub-subfamily. In terms of assembly, homodimer; the dimers can form tetramers. Interacts with NALCN. Interacts with TMEM147.

It is found in the cell membrane. The protein localises to the postsynaptic cell membrane. Its subcellular location is the basolateral cell membrane. It localises to the endoplasmic reticulum membrane. The muscarinic acetylcholine receptor mediates various cellular responses, including inhibition of adenylate cyclase, breakdown of phosphoinositides and modulation of potassium channels through the action of G proteins. Primary transducing effect is Pi turnover. The sequence is that of Muscarinic acetylcholine receptor M3 (Chrm3) from Rattus norvegicus (Rat).